The following is an 85-amino-acid chain: Small ribosomal subunit protein bS20 (85 aa).

This sequence belongs to the bacterial ribosomal protein bS20 family.

Functionally, binds directly to 16S ribosomal RNA. The protein is Small ribosomal subunit protein bS20 of Borrelia hermsii (strain HS1 / DAH).